The primary structure comprises 631 residues: Guanylate-binding protein 4 (631 aa).

Residues 33 to 283 (SQPVVVVAIV…FASYIFTYAK (251 aa)) enclose the GB1/RHD3-type G domain. GTP-binding positions include 43 to 50 (GWSHTGKS) and 103 to 107 (DTEGL). Positions 492 to 592 (IAEKHTKKEA…GHNIKEMKQN (101 aa)) form a coiled coil.

This sequence belongs to the TRAFAC class dynamin-like GTPase superfamily. GB1/RHD3 GTPase family. GB1 subfamily. As to quaternary structure, heterodimer with other family members, including GBP1, GBP2 and GBP5. Dimerization regulates subcellular location. Interacts with IRF7; preventing interaction between TRAF6 and IRF7, resulting in impaired TRAF6-mediated IRF7 ubiquitination. In terms of tissue distribution, mainly expressed in organs of the immune system, such as spleen and lymph nodes.

It is found in the golgi apparatus membrane. The protein resides in the cytoplasm. The protein localises to the nucleus. It localises to the perinuclear region. It catalyses the reaction GTP + H2O = GDP + phosphate + H(+). Functionally, interferon (IFN)-inducible GTPase that plays important roles in innate immunity against a diverse range of bacterial, viral and protozoan pathogens. Negatively regulates the antiviral response by inhibiting activation of IRF7 transcription factor. The protein is Guanylate-binding protein 4 of Mus musculus (Mouse).